The chain runs to 401 residues: L-rhamnonate dehydratase (401 aa).

Residues histidine 29 and arginine 55 each contribute to the substrate site. Residues aspartate 222, glutamate 248, and glutamate 276 each coordinate Mg(2+). The active-site Proton acceptor is the histidine 325. Glutamate 345 contributes to the substrate binding site.

It belongs to the mandelate racemase/muconate lactonizing enzyme family. RhamD subfamily. In terms of assembly, homooctamer; tetramer of dimers. Mg(2+) serves as cofactor.

It catalyses the reaction L-rhamnonate = 2-dehydro-3-deoxy-L-rhamnonate + H2O. Its function is as follows. Catalyzes the dehydration of L-rhamnonate to 2-keto-3-deoxy-L-rhamnonate (KDR). This is L-rhamnonate dehydratase from Klebsiella pneumoniae subsp. pneumoniae (strain ATCC 700721 / MGH 78578).